The primary structure comprises 303 residues: E3 ubiquitin-protein ligase SINA-like 3 (303 aa).

The interval 1-30 is disordered; sequence MENITNNSERSLDRPKRQRPVSMENVGGTA. The RING-type zinc finger occupies 49-85; sequence CPICYHKLGAPIYQCDNGHIACSSCCKKVKYKCPYCS. The tract at residues 99 to 286 is SBD; it reads IVEAVVVSCP…MSIPYYLLDE (188 aa). The SIAH-type zinc-finger motif lies at 102-162; sequence AVVVSCPNAK…LYRHYHAEHK (61 aa). 8 residues coordinate Zn(2+): Cys107, Cys114, His128, Cys132, Cys139, Cys144, His156, and His161.

The protein belongs to the SINA (Seven in absentia) family.

The enzyme catalyses S-ubiquitinyl-[E2 ubiquitin-conjugating enzyme]-L-cysteine + [acceptor protein]-L-lysine = [E2 ubiquitin-conjugating enzyme]-L-cysteine + N(6)-ubiquitinyl-[acceptor protein]-L-lysine.. It participates in protein modification; protein ubiquitination. In terms of biological role, E3 ubiquitin-protein ligase that mediates ubiquitination and subsequent proteasomal degradation of target proteins. E3 ubiquitin ligases accept ubiquitin from an E2 ubiquitin-conjugating enzyme in the form of a thioester and then directly transfers the ubiquitin to targeted substrates. It probably triggers the ubiquitin-mediated degradation of different substrates. The protein is E3 ubiquitin-protein ligase SINA-like 3 of Arabidopsis thaliana (Mouse-ear cress).